The following is a 221-amino-acid chain: Sentrin-specific protease 8 (221 aa).

M1 is modified (N-acetylmethionine). The interval 11–174 (SLLRQSDVSL…MYVICNTEAL (164 aa)) is protease. Residues H102 and D119 contribute to the active site. Catalysis depends on C163, which acts as the Nucleophile.

This sequence belongs to the peptidase C48 family.

Functionally, protease that catalyzes two essential functions in the NEDD8 pathway: processing of full-length NEDD8 to its mature form and deconjugation of NEDD8 from targeted proteins such as cullins or p53. This chain is Sentrin-specific protease 8 (Senp8), found in Mus musculus (Mouse).